A 331-amino-acid polypeptide reads, in one-letter code: tRNA U34 carboxymethyltransferase (331 aa).

Residues lysine 91, tryptophan 105, lysine 110, glycine 130, 152-154 (DPS), 181-182 (IE), methionine 196, tyrosine 200, and arginine 315 contribute to the carboxy-S-adenosyl-L-methionine site.

Belongs to the class I-like SAM-binding methyltransferase superfamily. CmoB family. In terms of assembly, homotetramer.

The enzyme catalyses carboxy-S-adenosyl-L-methionine + 5-hydroxyuridine(34) in tRNA = 5-carboxymethoxyuridine(34) in tRNA + S-adenosyl-L-homocysteine + H(+). Its function is as follows. Catalyzes carboxymethyl transfer from carboxy-S-adenosyl-L-methionine (Cx-SAM) to 5-hydroxyuridine (ho5U) to form 5-carboxymethoxyuridine (cmo5U) at position 34 in tRNAs. This Shewanella baltica (strain OS185) protein is tRNA U34 carboxymethyltransferase.